The following is a 354-amino-acid chain: Methionine import ATP-binding protein MetN (354 aa).

The region spanning 8 to 250 (LDHIDITFHQ…PKEALTQEFI (243 aa)) is the ABC transporter domain. 42-49 (GYSGAGKS) is an ATP binding site.

This sequence belongs to the ABC transporter superfamily. Methionine importer (TC 3.A.1.24) family. The complex is composed of two ATP-binding proteins (MetN), two transmembrane proteins (MetI) and a solute-binding protein (MetQ).

The protein localises to the cell membrane. It catalyses the reaction L-methionine(out) + ATP + H2O = L-methionine(in) + ADP + phosphate + H(+). It carries out the reaction D-methionine(out) + ATP + H2O = D-methionine(in) + ADP + phosphate + H(+). Part of the ABC transporter complex MetNIQ involved in methionine import. Responsible for energy coupling to the transport system. The protein is Methionine import ATP-binding protein MetN of Streptococcus pyogenes serotype M4 (strain MGAS10750).